The sequence spans 323 residues: Beta-ketoacyl-[acyl-carrier-protein] synthase III (323 aa).

Residues C113 and H250 contribute to the active site. The tract at residues 251–255 (QANRR) is ACP-binding. N280 is an active-site residue.

The protein belongs to the thiolase-like superfamily. FabH family. In terms of assembly, homodimer.

Its subcellular location is the cytoplasm. It carries out the reaction malonyl-[ACP] + acetyl-CoA + H(+) = 3-oxobutanoyl-[ACP] + CO2 + CoA. It participates in lipid metabolism; fatty acid biosynthesis. In terms of biological role, catalyzes the condensation reaction of fatty acid synthesis by the addition to an acyl acceptor of two carbons from malonyl-ACP. Catalyzes the first condensation reaction which initiates fatty acid synthesis and may therefore play a role in governing the total rate of fatty acid production. Possesses both acetoacetyl-ACP synthase and acetyl transacylase activities. Its substrate specificity determines the biosynthesis of branched-chain and/or straight-chain of fatty acids. The polypeptide is Beta-ketoacyl-[acyl-carrier-protein] synthase III (Rhizobium meliloti (strain 1021) (Ensifer meliloti)).